Here is a 92-residue protein sequence, read N- to C-terminus: Probable Fe(2+)-trafficking protein (92 aa).

Belongs to the Fe(2+)-trafficking protein family.

In terms of biological role, could be a mediator in iron transactions between iron acquisition and iron-requiring processes, such as synthesis and/or repair of Fe-S clusters in biosynthetic enzymes. This is Probable Fe(2+)-trafficking protein from Shewanella baltica (strain OS223).